The primary structure comprises 334 residues: Fructose-1,6-bisphosphatase class 1 (334 aa).

Glu90, Asp113, Leu115, and Asp116 together coordinate Mg(2+). Substrate-binding positions include 116–119 (DGSS), Asn209, Tyr242, and Lys272. Mg(2+) is bound at residue Glu278.

The protein belongs to the FBPase class 1 family. In terms of assembly, homotetramer. Mg(2+) is required as a cofactor.

The protein resides in the cytoplasm. It carries out the reaction beta-D-fructose 1,6-bisphosphate + H2O = beta-D-fructose 6-phosphate + phosphate. Its pathway is carbohydrate biosynthesis; gluconeogenesis. The chain is Fructose-1,6-bisphosphatase class 1 from Actinobacillus succinogenes (strain ATCC 55618 / DSM 22257 / CCUG 43843 / 130Z).